Reading from the N-terminus, the 59-residue chain is UPF0337 protein MM_2677 (59 aa).

2 stretches are compositionally biased toward basic and acidic residues: residues 1–24 (MKEG…KESA) and 33–59 (MEAK…EFEK). The disordered stretch occupies residues 1 to 59 (MKEGTKEEMEGKFSKAKGEIKESAGEMTGDIEMEAKGEAEKRKGEAQEKVGKIRKEFEK).

Belongs to the UPF0337 (CsbD) family.

This Methanosarcina mazei (strain ATCC BAA-159 / DSM 3647 / Goe1 / Go1 / JCM 11833 / OCM 88) (Methanosarcina frisia) protein is UPF0337 protein MM_2677.